The primary structure comprises 92 residues: Muscle LIM protein 1 (92 aa).

An LIM zinc-binding domain is found at 11-62; the sequence is CPACGKSVYAAEERVAGGYKFHKTCFKCSMCNKALDSTNCTEHEKELFCKNC. Residues 65 to 70 carry the Nuclear localization signal motif; that stretch reads RKYGPK.

In terms of tissue distribution, in the embryo, expression is restricted to the somatic, visceral, and pharyngeal muscles. Within the somatic musculature, MLP60 is distributed throughout the muscle fibers. There is no expression in cardiac mesoderm or in fat body.

It is found in the cytoplasm. It localises to the nucleus. Its function is as follows. Positive regulator of myogenesis. This Drosophila melanogaster (Fruit fly) protein is Muscle LIM protein 1 (Mlp60A).